We begin with the raw amino-acid sequence, 425 residues long: Protein-glutamate methylesterase/protein-glutamine glutaminase (425 aa).

The Response regulatory domain maps to 22–140 (RVMVVDDSVV…EVAAADIFRH (119 aa)). Aspartate 73 bears the 4-aspartylphosphate mark. Disordered regions lie at residues 150-174 (AAKR…SNAS) and 203-223 (VQRE…RPQP). The CheB-type methylesterase domain maps to 221 to 417 (PQPTLRSFSA…PLQQIAPKLV (197 aa)). Residues serine 241, histidine 269, and aspartate 365 contribute to the active site.

This sequence belongs to the CheB family. Post-translationally, phosphorylated by CheA. Phosphorylation of the N-terminal regulatory domain activates the methylesterase activity.

It localises to the cytoplasm. The enzyme catalyses [protein]-L-glutamate 5-O-methyl ester + H2O = L-glutamyl-[protein] + methanol + H(+). It catalyses the reaction L-glutaminyl-[protein] + H2O = L-glutamyl-[protein] + NH4(+). Functionally, involved in chemotaxis. Part of a chemotaxis signal transduction system that modulates chemotaxis in response to various stimuli. Catalyzes the demethylation of specific methylglutamate residues introduced into the chemoreceptors (methyl-accepting chemotaxis proteins or MCP) by CheR. Also mediates the irreversible deamidation of specific glutamine residues to glutamic acid. This is Protein-glutamate methylesterase/protein-glutamine glutaminase from Nitrobacter winogradskyi (strain ATCC 25391 / DSM 10237 / CIP 104748 / NCIMB 11846 / Nb-255).